A 143-amino-acid chain; its full sequence is Large ribosomal subunit protein uL11 (143 aa).

Belongs to the universal ribosomal protein uL11 family. In terms of assembly, part of the ribosomal stalk of the 50S ribosomal subunit. Interacts with L10 and the large rRNA to form the base of the stalk. L10 forms an elongated spine to which L12 dimers bind in a sequential fashion forming a multimeric L10(L12)X complex. One or more lysine residues are methylated.

Its function is as follows. Forms part of the ribosomal stalk which helps the ribosome interact with GTP-bound translation factors. This chain is Large ribosomal subunit protein uL11, found in Azoarcus sp. (strain BH72).